A 292-amino-acid polypeptide reads, in one-letter code: 4-hydroxy-tetrahydrodipicolinate synthase (292 aa).

Pyruvate is bound at residue Thr45. Catalysis depends on Tyr133, which acts as the Proton donor/acceptor. Catalysis depends on Lys161, which acts as the Schiff-base intermediate with substrate. Residue Ile203 participates in pyruvate binding.

This sequence belongs to the DapA family. As to quaternary structure, homotetramer; dimer of dimers.

The protein localises to the cytoplasm. The enzyme catalyses L-aspartate 4-semialdehyde + pyruvate = (2S,4S)-4-hydroxy-2,3,4,5-tetrahydrodipicolinate + H2O + H(+). Its pathway is amino-acid biosynthesis; L-lysine biosynthesis via DAP pathway; (S)-tetrahydrodipicolinate from L-aspartate: step 3/4. Its function is as follows. Catalyzes the condensation of (S)-aspartate-beta-semialdehyde [(S)-ASA] and pyruvate to 4-hydroxy-tetrahydrodipicolinate (HTPA). This Shigella flexneri protein is 4-hydroxy-tetrahydrodipicolinate synthase.